A 1398-amino-acid chain; its full sequence is DNA-directed RNA polymerase subunit beta' (1398 aa).

Zn(2+) contacts are provided by Cys70, Cys72, Cys85, and Cys88. Residues Asp460, Asp462, and Asp464 each coordinate Mg(2+). Cys814, Cys888, Cys895, and Cys898 together coordinate Zn(2+).

It belongs to the RNA polymerase beta' chain family. As to quaternary structure, the RNAP catalytic core consists of 2 alpha, 1 beta, 1 beta' and 1 omega subunit. When a sigma factor is associated with the core the holoenzyme is formed, which can initiate transcription. Mg(2+) serves as cofactor. It depends on Zn(2+) as a cofactor.

It catalyses the reaction RNA(n) + a ribonucleoside 5'-triphosphate = RNA(n+1) + diphosphate. Its function is as follows. DNA-dependent RNA polymerase catalyzes the transcription of DNA into RNA using the four ribonucleoside triphosphates as substrates. In Pseudomonas putida (Arthrobacter siderocapsulatus), this protein is DNA-directed RNA polymerase subunit beta'.